A 398-amino-acid polypeptide reads, in one-letter code: Cell cycle checkpoint control protein RAD9B (398 aa).

Residues 272-281 (RTSSPQSLRL) show a composition bias toward polar residues. A disordered region spans residues 272–359 (RTSSPQSLRL…DMEEGQSPSP (88 aa)). Residues 324 to 336 (SSSAAETRRASAS) show a composition bias toward low complexity. Phosphoserine is present on residues serine 349 and serine 358.

Belongs to the rad9 family. In terms of assembly, interacts with HUS1, HUS1B, RAD1, RAD9A and RAD17.

This chain is Cell cycle checkpoint control protein RAD9B (Rad9b), found in Rattus norvegicus (Rat).